Reading from the N-terminus, the 93-residue chain is Large ribosomal subunit protein bL27 (93 aa).

The propeptide occupies 1–9; it reads MLQLNLQFF. The interval 14–33 is disordered; sequence GVGSTKNGRDSISKRLGAKR.

Belongs to the bacterial ribosomal protein bL27 family. The N-terminus is cleaved by ribosomal processing cysteine protease Prp.

This is Large ribosomal subunit protein bL27 from Exiguobacterium sp. (strain ATCC BAA-1283 / AT1b).